Reading from the N-terminus, the 157-residue chain is Small ribosomal subunit protein uS7 (157 aa).

This sequence belongs to the universal ribosomal protein uS7 family. In terms of assembly, part of the 30S ribosomal subunit. Contacts proteins S9 and S11.

Its function is as follows. One of the primary rRNA binding proteins, it binds directly to 16S rRNA where it nucleates assembly of the head domain of the 30S subunit. Is located at the subunit interface close to the decoding center, probably blocks exit of the E-site tRNA. This is Small ribosomal subunit protein uS7 from Chlamydia pneumoniae (Chlamydophila pneumoniae).